A 275-amino-acid polypeptide reads, in one-letter code: Pyridoxal phosphate homeostasis protein (275 aa).

Serine 6 bears the Phosphoserine mark. N6-(pyridoxal phosphate)lysine is present on lysine 47. Tyrosine 69 carries the post-translational modification Phosphotyrosine. Residue lysine 125 is modified to N6-succinyllysine. Residues serine 226 and serine 244 each carry the phosphoserine modification.

It belongs to the pyridoxal phosphate-binding protein YggS/PROSC family.

Functionally, pyridoxal 5'-phosphate (PLP)-binding protein, which may be involved in intracellular homeostatic regulation of pyridoxal 5'-phosphate (PLP), the active form of vitamin B6. The polypeptide is Pyridoxal phosphate homeostasis protein (Pongo abelii (Sumatran orangutan)).